The following is a 465-amino-acid chain: UDP-N-acetylmuramate--L-alanine ligase (465 aa).

Residue 114–120 (GTHGKTT) coordinates ATP.

This sequence belongs to the MurCDEF family.

The protein resides in the cytoplasm. It carries out the reaction UDP-N-acetyl-alpha-D-muramate + L-alanine + ATP = UDP-N-acetyl-alpha-D-muramoyl-L-alanine + ADP + phosphate + H(+). It functions in the pathway cell wall biogenesis; peptidoglycan biosynthesis. Its function is as follows. Cell wall formation. The polypeptide is UDP-N-acetylmuramate--L-alanine ligase (Chelativorans sp. (strain BNC1)).